The sequence spans 186 residues: uncharacterized protein (186 aa).

The tract at residues 156 to 186 is disordered; it reads DTKELERTTQPPEHQKHHQEPREKRGMNKRD. Over residues 173-186 the composition is skewed to basic and acidic residues; it reads HQEPREKRGMNKRD.

This is an uncharacterized protein from Bacillus subtilis (strain 168).